The primary structure comprises 1447 residues: Bud site selection protein 4 (1447 aa).

A compositionally biased stretch (basic and acidic residues) spans 1 to 16; sequence MHDAESTVDSLLKEID. Disordered stretches follow at residues 1 to 37 and 57 to 76; these read MHDA…TPHN and NTRS…KMST. At serine 10 the chain carries Phosphoserine. Polar residues-rich tracts occupy residues 22-32 and 59-76; these read TKSNITQNGSE and RSNA…KMST. 5 positions are modified to phosphoserine: serine 78, serine 81, serine 91, serine 96, and serine 167. The tract at residues 272-316 is disordered; the sequence is NLPSKLLNTSNNSHSDSRSPTASVEDLNISTNLPGADSSQNNPVT. A compositionally biased stretch (polar residues) spans 277-316; it reads LLNTSNNSHSDSRSPTASVEDLNISTNLPGADSSQNNPVT. Residue threonine 365 is modified to Phosphothreonine. Serine 367 carries the post-translational modification Phosphoserine. The disordered stretch occupies residues 444–588; the sequence is HQESEHANEQ…VEENEESEHV (145 aa). The segment covering 475-494 has biased composition (basic and acidic residues); the sequence is EFQRNSKDGEEYRIVQHEES. A compositionally biased stretch (polar residues) spans 497–509; sequence GQRTKSSEENIIN. Position 511 is a phosphoserine (serine 511). A compositionally biased stretch (polar residues) spans 538-548; that stretch reads SSSCEDQSVSE. Residues 549–580 show a composition bias toward basic and acidic residues; sequence ARNKDSIEEKEVETKDENIETEKDESEYHKVE. The residue at position 616 (serine 616) is a Phosphoserine. A compositionally biased stretch (polar residues) spans 649 to 664; that stretch reads NSQFSQQSSITTASTV. The segment at 649-672 is disordered; that stretch reads NSQFSQQSSITTASTVDSKKDNGS. The interval 768–879 is interaction with IQG1; the sequence is EHENIPLSTH…SLWESSYELK (112 aa). Residues serine 805 and serine 811 each carry the phosphoserine modification. Residues 1302 to 1413 enclose the PH domain; sequence NIYKEGYLLQ…WYNKLQEVVE (112 aa).

The protein belongs to the BUD4 family. In terms of assembly, interacts with AXL1, IQG1 and SEC3. In terms of processing, phosphorylated by CDC28.

Its subcellular location is the bud neck. Functionally, required for establishment of the axial budding pattern in haploid cells. Cooperates with other bud site selection proteins to recognize a spatial landmark during mitosis and they subsequently become a landmark for downstream polarity establishment factors that coordinate axial budding and cytokinesis. Involved in the septin organization at the bud neck. The sequence is that of Bud site selection protein 4 (BUD4) from Saccharomyces cerevisiae (strain YJM789) (Baker's yeast).